Consider the following 405-residue polypeptide: S-adenosylmethionine synthase (405 aa).

141-146 is a binding site for ATP; that stretch reads GQGSVD.

It belongs to the AdoMet synthase 2 family. Requires Mg(2+) as cofactor.

The enzyme catalyses L-methionine + ATP + H2O = S-adenosyl-L-methionine + phosphate + diphosphate. Its pathway is amino-acid biosynthesis; S-adenosyl-L-methionine biosynthesis; S-adenosyl-L-methionine from L-methionine: step 1/1. Its function is as follows. Catalyzes the formation of S-adenosylmethionine from methionine and ATP. The sequence is that of S-adenosylmethionine synthase from Methanococcus maripaludis (strain C7 / ATCC BAA-1331).